We begin with the raw amino-acid sequence, 426 residues long: Putative phosphate permease CT_962 (426 aa).

The next 11 membrane-spanning stretches (helical) occupy residues 1–21, 37–57, 83–103, 104–124, 140–160, 183–203, 207–227, 260–280, 309–329, 365–385, and 399–419; these read MWLL…NIGA, LTLK…AVLL, VFGM…ASFC, GWPV…GIIL, VSWL…FSFI, AIII…APVI, PALR…IWGI, LIVE…MSFA, VLLV…ATWG, LGFP…IGFA, and IVLS…VFFL.

It belongs to the inorganic phosphate transporter (PiT) (TC 2.A.20) family.

It localises to the cell membrane. In terms of biological role, potential transporter for phosphate. The chain is Putative phosphate permease CT_962 from Chlamydia trachomatis serovar D (strain ATCC VR-885 / DSM 19411 / UW-3/Cx).